The following is a 373-amino-acid chain: Histidinol-phosphate aminotransferase (373 aa).

Residues 1-10 are compositionally biased toward polar residues; the sequence is MTGVPGSSIT. Residues 1-45 are disordered; it reads MTGVPGSSITLDDLPLRDDLRGKSPYGAPQLSVPVRLNTNENPHP. Lys-237 bears the N6-(pyridoxal phosphate)lysine mark.

Belongs to the class-II pyridoxal-phosphate-dependent aminotransferase family. Histidinol-phosphate aminotransferase subfamily. In terms of assembly, homodimer. The cofactor is pyridoxal 5'-phosphate.

It carries out the reaction L-histidinol phosphate + 2-oxoglutarate = 3-(imidazol-4-yl)-2-oxopropyl phosphate + L-glutamate. It functions in the pathway amino-acid biosynthesis; L-histidine biosynthesis; L-histidine from 5-phospho-alpha-D-ribose 1-diphosphate: step 7/9. In Mycolicibacterium vanbaalenii (strain DSM 7251 / JCM 13017 / BCRC 16820 / KCTC 9966 / NRRL B-24157 / PYR-1) (Mycobacterium vanbaalenii), this protein is Histidinol-phosphate aminotransferase.